The primary structure comprises 324 residues: Phospho-N-acetylmuramoyl-pentapeptide-transferase (324 aa).

The next 10 helical transmembrane spans lie at 5–25 (GLLV…PLFI), 52–72 (PTMG…IMAI), 77–97 (LGAE…IGFL), 122–142 (VIAI…YIMI), 149–169 (FELG…GSNA), 176–196 (LDGL…IIAV), 201–221 (FGVA…LVFN), 227–247 (VFMG…VAIL), 253–273 (LLVI…IQVI), and 302–322 (VVVT…YIGV).

The protein belongs to the glycosyltransferase 4 family. MraY subfamily. It depends on Mg(2+) as a cofactor.

It localises to the cell membrane. The enzyme catalyses UDP-N-acetyl-alpha-D-muramoyl-L-alanyl-gamma-D-glutamyl-meso-2,6-diaminopimeloyl-D-alanyl-D-alanine + di-trans,octa-cis-undecaprenyl phosphate = di-trans,octa-cis-undecaprenyl diphospho-N-acetyl-alpha-D-muramoyl-L-alanyl-D-glutamyl-meso-2,6-diaminopimeloyl-D-alanyl-D-alanine + UMP. It functions in the pathway cell wall biogenesis; peptidoglycan biosynthesis. In terms of biological role, catalyzes the initial step of the lipid cycle reactions in the biosynthesis of the cell wall peptidoglycan: transfers peptidoglycan precursor phospho-MurNAc-pentapeptide from UDP-MurNAc-pentapeptide onto the lipid carrier undecaprenyl phosphate, yielding undecaprenyl-pyrophosphoryl-MurNAc-pentapeptide, known as lipid I. This Bacillus mycoides (strain KBAB4) (Bacillus weihenstephanensis) protein is Phospho-N-acetylmuramoyl-pentapeptide-transferase.